Consider the following 274-residue polypeptide: 4-hydroxy-3-methylbut-2-enyl diphosphate reductase (274 aa).

A [4Fe-4S] cluster-binding site is contributed by C12. (2E)-4-hydroxy-3-methylbut-2-enyl diphosphate contacts are provided by H36 and H70. Dimethylallyl diphosphate contacts are provided by H36 and H70. 2 residues coordinate isopentenyl diphosphate: H36 and H70. Residue C92 participates in [4Fe-4S] cluster binding. Residue H120 participates in (2E)-4-hydroxy-3-methylbut-2-enyl diphosphate binding. Dimethylallyl diphosphate is bound at residue H120. H120 provides a ligand contact to isopentenyl diphosphate. E122 functions as the Proton donor in the catalytic mechanism. (2E)-4-hydroxy-3-methylbut-2-enyl diphosphate is bound at residue T158. Position 186 (C186) interacts with [4Fe-4S] cluster. 4 residues coordinate (2E)-4-hydroxy-3-methylbut-2-enyl diphosphate: S214, S215, N216, and S258. 4 residues coordinate dimethylallyl diphosphate: S214, S215, N216, and S258. Isopentenyl diphosphate contacts are provided by S214, S215, N216, and S258.

This sequence belongs to the IspH family. It depends on [4Fe-4S] cluster as a cofactor.

The catalysed reaction is isopentenyl diphosphate + 2 oxidized [2Fe-2S]-[ferredoxin] + H2O = (2E)-4-hydroxy-3-methylbut-2-enyl diphosphate + 2 reduced [2Fe-2S]-[ferredoxin] + 2 H(+). It catalyses the reaction dimethylallyl diphosphate + 2 oxidized [2Fe-2S]-[ferredoxin] + H2O = (2E)-4-hydroxy-3-methylbut-2-enyl diphosphate + 2 reduced [2Fe-2S]-[ferredoxin] + 2 H(+). It participates in isoprenoid biosynthesis; dimethylallyl diphosphate biosynthesis; dimethylallyl diphosphate from (2E)-4-hydroxy-3-methylbutenyl diphosphate: step 1/1. It functions in the pathway isoprenoid biosynthesis; isopentenyl diphosphate biosynthesis via DXP pathway; isopentenyl diphosphate from 1-deoxy-D-xylulose 5-phosphate: step 6/6. Functionally, catalyzes the conversion of 1-hydroxy-2-methyl-2-(E)-butenyl 4-diphosphate (HMBPP) into a mixture of isopentenyl diphosphate (IPP) and dimethylallyl diphosphate (DMAPP). Acts in the terminal step of the DOXP/MEP pathway for isoprenoid precursor biosynthesis. This chain is 4-hydroxy-3-methylbut-2-enyl diphosphate reductase, found in Campylobacter concisus (strain 13826).